A 1519-amino-acid polypeptide reads, in one-letter code: Dicer-like protein 1 (1519 aa).

Polar residues predominate over residues 1–13; that stretch reads MTHQNTETASLAT. Positions 1-62 are disordered; that stretch reads MTHQNTETAS…KDPSQRQRQQ (62 aa). Acidic residues predominate over residues 39–48; that stretch reads SDESEGSEEE. The Helicase ATP-binding domain occupies 116-297; the sequence is LFERAKVQNT…EAARNLEALL (182 aa). ATP is bound at residue 129 to 136; the sequence is LDTGSGKT. The DEAH box motif lies at 242–245; it reads DEAH. The Helicase C-terminal domain maps to 431 to 601; it reads ALSSKVRVLW…QLLPEDRILH (171 aa). A Dicer dsRNA-binding fold domain is found at 634–724; sequence AITVLARYAS…NSVYHRRLPA (91 aa). A PAZ domain is found at 882 to 1001; the sequence is DDIEYQADMP…ICIEPLKISA (120 aa). RNase III domains lie at 1026 to 1184 and 1235 to 1387; these read GLEA…LTPG and CRRV…VDSN. Positions 1275, 1373, and 1376 each coordinate Mg(2+). The DRBM domain maps to 1421–1489; sequence TFLHNKLTNE…SENALTELLH (69 aa). Residues Cys1433, His1460, Cys1501, and Cys1503 each contribute to the Zn(2+) site.

It belongs to the helicase family. Dicer subfamily. The cofactor is Mg(2+). Mn(2+) is required as a cofactor.

In terms of biological role, dicer-like endonuclease involved in cleaving double-stranded RNA in the RNA interference (RNAi) pathway. Produces 21 to 25 bp dsRNAs (siRNAs) which target the selective destruction of homologous RNAs leading to sequence-specific suppression of gene expression, called post-transcriptional gene silencing (PTGS). Part of a broad host defense response against viral infection and transposons. The sequence is that of Dicer-like protein 1 (dcl1) from Aspergillus terreus (strain NIH 2624 / FGSC A1156).